The primary structure comprises 156 residues: Small ribosomal subunit protein uS7 (156 aa).

It belongs to the universal ribosomal protein uS7 family. As to quaternary structure, part of the 30S ribosomal subunit. Contacts proteins S9 and S11.

Its function is as follows. One of the primary rRNA binding proteins, it binds directly to 16S rRNA where it nucleates assembly of the head domain of the 30S subunit. Is located at the subunit interface close to the decoding center, probably blocks exit of the E-site tRNA. This chain is Small ribosomal subunit protein uS7, found in Herminiimonas arsenicoxydans.